The chain runs to 65 residues: Weak toxin CM-11 (65 aa).

Disulfide bonds link C3–C24, C6–C11, C17–C42, C46–C57, and C58–C63.

It belongs to the three-finger toxin family. Ancestral subfamily. Orphan group II sub-subfamily. Expressed by the venom gland.

It localises to the secreted. Functionally, binds with low affinity to muscular (alpha-1-beta-1-delta-epsilon/CHRNA1-CHRNB1-CHRND-CHRNE) and very low affinity to neuronal (alpha-7/CHRNA7) nicotinic acetylcholine receptor (nAChR). The protein is Weak toxin CM-11 of Naja haje haje (Egyptian cobra).